A 1594-amino-acid chain; its full sequence is Mucin-like protein (1594 aa).

Topologically, residues 1 to 1530 (DTTAGPDTTS…YETREDGLEM (1530 aa)) are extracellular. TSP type-1 domains follow at residues 141–196 (DGGF…GSCP), 198–253 (DGNF…PPCP), and 255–310 (DGNF…GPCP). Disulfide bonds link C153/C190, C157/C195, C168/C180, C210/C247, C214/C252, C225/C237, C267/C304, C271/C309, and C282/C294. The 167-residue stretch at 400 to 566 (LTISDDAFEQ…GVWFFRLEMN (167 aa)) folds into the NIDO domain. One can recognise an AMOP domain in the interval 568 to 706 (ILSLAGKKCN…RSCFGYTLRR (139 aa)). Residues 706–901 (RRGLIFGDPH…KWQINASQSL (196 aa)) enclose the VWFD domain. EGF-like domains follow at residues 1063–1108 (LILL…QYCQ) and 1110–1156 (KIDA…SICE). Disulfide bonds link C1067-C1075, C1069-C1096, C1098-C1107, C1114-C1127, C1121-C1141, C1144-C1155, C1161-C1173, C1169-C1182, C1285-C1296, C1292-C1305, C1307-C1320, C1326-C1341, C1334-C1350, and C1352-C1363. The EGF-like 3; calcium-binding domain occupies 1157-1191 (DIDECSDANVSKCDHSCINLPGSYVCDCNQGFSLE). One can recognise an EGF-like 4; calcium-binding domain in the interval 1281 to 1321 (DINECTTHRHKCSQICHNLDGSYTCSCQPGFNLSPDQTTCE). An EGF-like 5; calcium-binding domain is found at 1322 to 1364 (DIDECGLINEAHCEGSLEICINTMGSFRCECQDGFHRVNDTCQ). The chain crosses the membrane as a helical span at residues 1531–1551 (IWLLVGVSVAVAVPLMIVIVI). Topologically, residues 1552–1593 (LYREYRRIAKQRRKTNNFDLRQWSGARERTIYSGFTNSKSAR) are cytoplasmic.

As to expression, component of the acid-insoluble and acid-soluble organic matrix of the aragonitic skeleton (at protein level).

It localises to the membrane. The polypeptide is Mucin-like protein (Acropora millepora (Staghorn coral)).